The sequence spans 190 residues: Heme-binding protein 1 (190 aa).

Belongs to the HEBP family. In terms of assembly, monomer. In terms of tissue distribution, ubiquitously expressed. Extremely abundant in liver.

It is found in the cytoplasm. Functionally, may bind free porphyrinogens that may be present in the cell and thus facilitate removal of these potentially toxic compound. Binds with a high affinity to one molecule of heme or porphyrins. It binds metalloporphyrins, free porphyrins and N-methylprotoporphyrin with similar affinities. The polypeptide is Heme-binding protein 1 (Hebp1) (Mus musculus (Mouse)).